A 216-amino-acid chain; its full sequence is Soluble inorganic pyrophosphatase 3 (216 aa).

The span at 1 to 10 (MSEEAYEETQ) shows a compositional bias: acidic residues. The segment at 1–21 (MSEEAYEETQESSQSPRPVPK) is disordered. Residues Lys66 and Arg80 each contribute to the substrate site. Tyr88 functions as the Proton donor in the catalytic mechanism. Tyr92 is a substrate binding site. 3 residues coordinate Mg(2+): Asp102, Asp107, and Asp139. Tyr176 is a binding site for substrate.

The protein belongs to the PPase family. It depends on Mg(2+) as a cofactor. As to expression, expressed preferentially in stamen, pollen and flower, and at a low level in lateral roots and root elongation zones.

Its subcellular location is the cytoplasm. The enzyme catalyses diphosphate + H2O = 2 phosphate + H(+). The sequence is that of Soluble inorganic pyrophosphatase 3 from Arabidopsis thaliana (Mouse-ear cress).